Reading from the N-terminus, the 82-residue chain is Small ribosomal subunit protein uS17 (82 aa).

It belongs to the universal ribosomal protein uS17 family. Part of the 30S ribosomal subunit.

Its function is as follows. One of the primary rRNA binding proteins, it binds specifically to the 5'-end of 16S ribosomal RNA. The polypeptide is Small ribosomal subunit protein uS17 (Shewanella sp. (strain W3-18-1)).